Here is a 710-residue protein sequence, read N- to C-terminus: Polyribonucleotide nucleotidyltransferase (710 aa).

Mg(2+) is bound by residues Asp-488 and Asp-494. Positions 555–615 (PVIKVISIDP…EKVDAAIEQI (61 aa)) constitute a KH domain. The S1 motif domain occupies 625–688 (GDVFSGKVTR…NLGRLQLEEF (64 aa)). The tract at residues 688–710 (FSDSPDHKHGEKRSFKRHRKNDN) is disordered. Residues 691–700 (SPDHKHGEKR) are compositionally biased toward basic and acidic residues. Over residues 701–710 (SFKRHRKNDN) the composition is skewed to basic residues.

Belongs to the polyribonucleotide nucleotidyltransferase family. Mg(2+) is required as a cofactor.

The protein localises to the cytoplasm. The enzyme catalyses RNA(n+1) + phosphate = RNA(n) + a ribonucleoside 5'-diphosphate. Involved in mRNA degradation. Catalyzes the phosphorolysis of single-stranded polyribonucleotides processively in the 3'- to 5'-direction. The sequence is that of Polyribonucleotide nucleotidyltransferase from Pseudothermotoga lettingae (strain ATCC BAA-301 / DSM 14385 / NBRC 107922 / TMO) (Thermotoga lettingae).